The sequence spans 257 residues: Aspartate/glutamate leucyltransferase (257 aa).

Belongs to the R-transferase family. Bpt subfamily.

It is found in the cytoplasm. It carries out the reaction N-terminal L-glutamyl-[protein] + L-leucyl-tRNA(Leu) = N-terminal L-leucyl-L-glutamyl-[protein] + tRNA(Leu) + H(+). The enzyme catalyses N-terminal L-aspartyl-[protein] + L-leucyl-tRNA(Leu) = N-terminal L-leucyl-L-aspartyl-[protein] + tRNA(Leu) + H(+). In terms of biological role, functions in the N-end rule pathway of protein degradation where it conjugates Leu from its aminoacyl-tRNA to the N-termini of proteins containing an N-terminal aspartate or glutamate. This chain is Aspartate/glutamate leucyltransferase, found in Rhodopseudomonas palustris (strain HaA2).